We begin with the raw amino-acid sequence, 124 residues long: Glutaredoxin-2 (124 aa).

C13 and C16 are joined by a disulfide.

Belongs to the glutaredoxin family. In terms of assembly, homodimer.

The protein localises to the host cytoplasm. In terms of biological role, glutaredoxin necessary for virion morphogenesis and virus replication. Functions as a thiol-disulfide transfer protein between membrane-associated OPG128 and substrates OPG095 or OPG053. The complete pathway for formation of disulfide bonds in intracellular virion membrane proteins sequentially involves oxidation of OPG072, OPG128 and OPG088. Exhibit thioltransferase and dehydroascorbate reductase activities in vitro. In Homo sapiens (Human), this protein is Glutaredoxin-2 (OPG088).